Reading from the N-terminus, the 1036-residue chain is Lethal(2) giant larvae protein homolog 1 (1036 aa).

10 WD repeats span residues S38–L71, V78–F119, V139–L175, S199–F233, L239–P271, A289–V331, V339–L373, T395–S473, Q517–I592, and T601–S662. Residue S662 is modified to Phosphoserine. The segment at R670–Q694 is disordered. A compositionally biased stretch (polar residues) spans T678 to E693. WD repeat units follow at residues V722 to Q782, A791 to K843, L848 to S901, and V915 to A938. At T957 the chain carries Phosphothreonine. 3 positions are modified to phosphoserine: S964, S982, and S989. Residues P980–E1002 are disordered.

The protein belongs to the WD repeat L(2)GL family. As to quaternary structure, associated with nonmuscle myosin II heavy chain. Interacts with PRKCI/aPKC, PARD6B/Par-6 and PARD6A. Interacts with STX4A. Interacts with DCAF1. Interacts with RAB10 (GDP-bound form); the interaction is direct and promotes RAB10 association with membranes and activation through competition with the Rab inhibitor GDI1. Phosphorylated by PRKCI. As to expression, expressed at high level in the testis and at lower level in ovary, brain, spleen and kidney.

The protein localises to the early endosome membrane. The protein resides in the golgi apparatus. Its subcellular location is the trans-Golgi network membrane. It localises to the golgi apparatus membrane. It is found in the cell projection. The protein localises to the axon. The protein resides in the cytoplasm. Its subcellular location is the cytoskeleton. Functionally, cortical cytoskeleton protein found in a complex involved in maintaining cell polarity and epithelial integrity. Involved in the regulation of mitotic spindle orientation, proliferation, differentiation and tissue organization of neuroepithelial cells. Involved in axonogenesis through RAB10 activation thereby regulating vesicular membrane trafficking toward the axonal plasma membrane. This chain is Lethal(2) giant larvae protein homolog 1 (Llgl1), found in Rattus norvegicus (Rat).